The chain runs to 153 residues: Xanthine-guanine phosphoribosyltransferase (153 aa).

Residues 37–38, Arg-69, and 88–96 contribute to the 5-phospho-alpha-D-ribose 1-diphosphate site; these read RG and DDLVDTGGT. Arg-69 lines the GMP pocket. Position 89 (Asp-89) interacts with Mg(2+). Residues Asp-92 and Ile-135 each contribute to the guanine site. Xanthine is bound by residues Asp-92 and Ile-135. GMP-binding positions include 92–96 and 134–135; these read DTGGT and WI.

It belongs to the purine/pyrimidine phosphoribosyltransferase family. XGPT subfamily. As to quaternary structure, homotetramer. Requires Mg(2+) as cofactor.

It localises to the cell membrane. It carries out the reaction GMP + diphosphate = guanine + 5-phospho-alpha-D-ribose 1-diphosphate. It catalyses the reaction XMP + diphosphate = xanthine + 5-phospho-alpha-D-ribose 1-diphosphate. The enzyme catalyses IMP + diphosphate = hypoxanthine + 5-phospho-alpha-D-ribose 1-diphosphate. It participates in purine metabolism; GMP biosynthesis via salvage pathway; GMP from guanine: step 1/1. It functions in the pathway purine metabolism; XMP biosynthesis via salvage pathway; XMP from xanthine: step 1/1. Its function is as follows. Purine salvage pathway enzyme that catalyzes the transfer of the ribosyl-5-phosphate group from 5-phospho-alpha-D-ribose 1-diphosphate (PRPP) to the N9 position of the 6-oxopurines guanine and xanthine to form the corresponding ribonucleotides GMP (guanosine 5'-monophosphate) and XMP (xanthosine 5'-monophosphate), with the release of PPi. To a lesser extent, also acts on hypoxanthine. This is Xanthine-guanine phosphoribosyltransferase from Buchnera aphidicola subsp. Baizongia pistaciae (strain Bp).